The chain runs to 450 residues: MAASKTQGAVARMQEDRDGSCSTVGGVGYGDSKDCILEPLSLPESPGGTTTLEGSPSVPCIFCEEHFPVAEQDKLLKHMIIEHKIVIADVKLVADFQRYILYWRKRFTEQPITDFCSVIRINSTAPFEEQENYFLLCDVLPEDRILREELQKQRLREILEQQQQERNDTNFHGVCMFCNEEFLGNRSVILNHMAREHAFNIGLPDNIVNCNEFLCTLQKKLDNLQCLYCEKTFRDKNTLKDHMRKKQHRKINPKNREYDRFYVINYLELGKSWEEVQLEDDRELLDHQEDDWSDWEEHPASAVCLFCEKQAETIEKLYVHMEDAHEFDLLKIKSELGLNFYQQVKLVNFIRRQVHQCRCYGCHVKFKSKADLRTHMEETKHTSLLPDRKTWDQLEYYFPTYENDTLLCTLSDSESDLTAQEQNENVPIISEDTSKLYALKQSSILNQLLL.

Residue Ala2 is modified to N-acetylalanine. C2H2-type zinc fingers lie at residues 224 to 248 and 355 to 381; these read LQCLYCEKTFRDKNTLKDHMRKKQH and HQCRCYGCHVKFKSKADLRTHMEETKH.

This sequence belongs to the ZNF277 family. In terms of assembly, interacts (via zinc-finger domains) with RPS2/40S ribosomal protein S2, perhaps as nascent RPS2 is synthesized during translation; the interaction is direct; the interaction is extra-ribosomal. Interaction with RPS2 competes with the binding of RPS2 to protein arginine methyltransferase PRMT3. Interacts with Polycomb group (PcG) complex protein BMI1. May be part of a complex including at least ZNF277, BMI1 and RNF2/RING2.

It is found in the nucleus. In terms of biological role, probable transcription factor. Involved in modulation of cellular senescence; represses transcription of the tumor suppressor gene INK4A/ARF, perhaps acting via the Polycomb group (PcG) complex PRC1. This Homo sapiens (Human) protein is Zinc finger protein 277 (ZNF277).